The following is a 395-amino-acid chain: Multiple organellar RNA editing factor 8, chloroplastic/mitochondrial (395 aa).

The N-terminal 56 residues, 1–56 (MATHTISRSILCRPAKSLSFLFTRSFASSAPLAKSPASSLLSRSRPLVAAFSSVFR), are a transit peptide targeting the chloroplast and mitochondrion. Positions 211–236 (ANERNRRNDRPRNNDRSRNFERRREN) are enriched in basic and acidic residues. Residues 211-395 (ANERNRRNDR…RDGSGNPYQG (185 aa)) form a disordered region. Residues 240-300 (GPPPQRPPMG…GPRHPPPYGA (61 aa)) are compositionally biased toward pro residues. The span at 313 to 334 (QNYGGTPPPNYGGAPPANNMGG) shows a compositional bias: low complexity. The segment covering 335–355 (APPPNYGGGPPPQYGAVPPPQ) has biased composition (pro residues). A compositionally biased stretch (low complexity) spans 356-385 (YGGAPPQNNNYQQQGSGMQQPQYQNNYPPN).

Belongs to the MORF family. Interacts with protoporphyrinogen oxidase 1 PPOX1. Interacts with PCMP-H52/MEF10. Homodimer and heterodimers with MORF1/RIP8, MORF2/RIP2, MORF3/RIP3, MORF4/RIP4, MORF5/RIP5, MORF6/RIP6 and MORF7/RIP7. Interacts with RBG3/ORRM3. Interacts with PCMP-A2/PMD1. Interacts with ORRM1 and VAT3/OZ1. Interacts with PCMP-H13/MEF35. Interacts with RBG5/ORRM4. Interacts with ORRM6.

Its subcellular location is the mitochondrion. It is found in the plastid. It localises to the chloroplast. In terms of biological role, involved in organellar RNA editing. Required for the processing of numerous RNA editing sites in mitochondria and plastids. Binds to the plastid RARE1 factor, a pentatricopeptide repeat-containing protein involved in RNA editing. This Arabidopsis thaliana (Mouse-ear cress) protein is Multiple organellar RNA editing factor 8, chloroplastic/mitochondrial.